Reading from the N-terminus, the 219-residue chain is PRELI domain-containing protein 1, mitochondrial (219 aa).

Positions 36-174 constitute a PRELI/MSF1 domain; that stretch reads TEDIVHREVT…ILAKLQGEAP (139 aa).

As to quaternary structure, forms a complex with TRIAP1 in the mitochondrion intermembrane space. Interacts with OPA1 and AIFM1. In terms of tissue distribution, highly expressed in fetal liver; less expressed in fetal brain, lung, and kidney. At the adult stage, expression is drastically reduced in the liver but highly expressed in the spleen, brain, lung, lymph nodes and peripheral blood leukocytes.

Its subcellular location is the mitochondrion. The protein localises to the mitochondrion intermembrane space. The catalysed reaction is a 1,2-diacyl-sn-glycero-3-phosphate(in) = a 1,2-diacyl-sn-glycero-3-phosphate(out). Involved in the modulation of the mitochondrial apoptotic pathway by ensuring the accumulation of cardiolipin (CL) in mitochondrial membranes. In vitro, the TRIAP1:PRELID1 complex mediates the transfer of phosphatidic acid (PA) between liposomes and probably functions as a PA transporter across the mitochondrion intermembrane space to provide PA for CL synthesis in the inner membrane. Regulates the mitochondrial apoptotic pathway in primary Th cells. Regulates Th cell differentiation by down-regulating STAT6 thereby reducing IL-4-induced Th2 cell number. May be important for the development of vital and immunocompetent organs. The protein is PRELI domain-containing protein 1, mitochondrial (PRELID1) of Homo sapiens (Human).